A 436-amino-acid chain; its full sequence is Bifunctional protein GlmU (436 aa).

Residues 1-225 are pyrophosphorylase; sequence MNNNTSIIIL…EQNFMGINDK (225 aa). Residues 10–13, K24, Q76, and 83–84 each bind UDP-N-acetyl-alpha-D-glucosamine; these read LAAG and GT. Position 104 (D104) interacts with Mg(2+). UDP-N-acetyl-alpha-D-glucosamine is bound by residues G137, E151, N166, and N223. Residue N223 participates in Mg(2+) binding. Residues 226 to 246 form a linker region; that stretch reads FQLSIAEKIMQDEIKQNLMKA. An N-acetyltransferase region spans residues 247–436; that stretch reads GVLMRMPESI…KFFGKDDVKK (190 aa). Positions 310 and 327 each coordinate UDP-N-acetyl-alpha-D-glucosamine. The Proton acceptor role is filled by H338. Residues Y341 and N352 each coordinate UDP-N-acetyl-alpha-D-glucosamine. Acetyl-CoA-binding positions include 361–362, S380, A398, and R415; that span reads NY.

This sequence in the N-terminal section; belongs to the N-acetylglucosamine-1-phosphate uridyltransferase family. In the C-terminal section; belongs to the transferase hexapeptide repeat family. In terms of assembly, homotrimer. It depends on Mg(2+) as a cofactor.

The protein resides in the cytoplasm. It catalyses the reaction alpha-D-glucosamine 1-phosphate + acetyl-CoA = N-acetyl-alpha-D-glucosamine 1-phosphate + CoA + H(+). The catalysed reaction is N-acetyl-alpha-D-glucosamine 1-phosphate + UTP + H(+) = UDP-N-acetyl-alpha-D-glucosamine + diphosphate. It participates in nucleotide-sugar biosynthesis; UDP-N-acetyl-alpha-D-glucosamine biosynthesis; N-acetyl-alpha-D-glucosamine 1-phosphate from alpha-D-glucosamine 6-phosphate (route II): step 2/2. The protein operates within nucleotide-sugar biosynthesis; UDP-N-acetyl-alpha-D-glucosamine biosynthesis; UDP-N-acetyl-alpha-D-glucosamine from N-acetyl-alpha-D-glucosamine 1-phosphate: step 1/1. It functions in the pathway bacterial outer membrane biogenesis; LPS lipid A biosynthesis. In terms of biological role, catalyzes the last two sequential reactions in the de novo biosynthetic pathway for UDP-N-acetylglucosamine (UDP-GlcNAc). The C-terminal domain catalyzes the transfer of acetyl group from acetyl coenzyme A to glucosamine-1-phosphate (GlcN-1-P) to produce N-acetylglucosamine-1-phosphate (GlcNAc-1-P), which is converted into UDP-GlcNAc by the transfer of uridine 5-monophosphate (from uridine 5-triphosphate), a reaction catalyzed by the N-terminal domain. This is Bifunctional protein GlmU from Campylobacter concisus (strain 13826).